The primary structure comprises 147 residues: Ponticulin-like protein C1 (147 aa).

An N-terminal signal peptide occupies residues 1–20 (MKFTKSLLLLIVAVFASSNA). A lipid anchor (GPI-like-anchor amidated asparagine) is attached at Asn118. Asn118 carries N-linked (GlcNAc...) asparagine glycosylation. A propeptide spans 119 to 147 (SSESDSSDSTRIGASFALAASVLLSMLAI) (removed in mature form).

This sequence belongs to the ponticulin family. The GPI-like-anchor contains a phosphoceramide group, rather than a phosphatidyl group.

The protein resides in the cell membrane. The protein is Ponticulin-like protein C1 (ponC1) of Dictyostelium discoideum (Social amoeba).